The following is a 215-amino-acid chain: Ribosomal RNA small subunit methyltransferase G (215 aa).

S-adenosyl-L-methionine is bound by residues Gly-77, Phe-82, 130 to 131, and Arg-146; that span reads IE.

This sequence belongs to the methyltransferase superfamily. RNA methyltransferase RsmG family.

The protein localises to the cytoplasm. It carries out the reaction guanosine(527) in 16S rRNA + S-adenosyl-L-methionine = N(7)-methylguanosine(527) in 16S rRNA + S-adenosyl-L-homocysteine. Functionally, specifically methylates the N7 position of guanine in position 527 of 16S rRNA. The chain is Ribosomal RNA small subunit methyltransferase G from Bartonella quintana (strain Toulouse) (Rochalimaea quintana).